The following is a 130-amino-acid chain: Protein NrdI (130 aa).

This sequence belongs to the NrdI family.

Probably involved in ribonucleotide reductase function. This is Protein NrdI from Staphylococcus carnosus (strain TM300).